Here is a 145-residue protein sequence, read N- to C-terminus: ATP synthase epsilon chain (145 aa).

Positions 100-123 (RAQRAKQRAEDAIKTASEKHDSDE) are disordered. Residues 106-123 (QRAEDAIKTASEKHDSDE) are compositionally biased toward basic and acidic residues.

It belongs to the ATPase epsilon chain family. In terms of assembly, F-type ATPases have 2 components, CF(1) - the catalytic core - and CF(0) - the membrane proton channel. CF(1) has five subunits: alpha(3), beta(3), gamma(1), delta(1), epsilon(1). CF(0) has three main subunits: a, b and c.

It localises to the cell membrane. Functionally, produces ATP from ADP in the presence of a proton gradient across the membrane. In Latilactobacillus sakei subsp. sakei (strain 23K) (Lactobacillus sakei subsp. sakei), this protein is ATP synthase epsilon chain.